Consider the following 174-residue polypeptide: Large ribosomal subunit protein uL10 (174 aa).

Belongs to the universal ribosomal protein uL10 family. As to quaternary structure, part of the ribosomal stalk of the 50S ribosomal subunit. The N-terminus interacts with L11 and the large rRNA to form the base of the stalk. The C-terminus forms an elongated spine to which L12 dimers bind in a sequential fashion forming a multimeric L10(L12)X complex.

Its function is as follows. Forms part of the ribosomal stalk, playing a central role in the interaction of the ribosome with GTP-bound translation factors. This is Large ribosomal subunit protein uL10 from Verminephrobacter eiseniae (strain EF01-2).